We begin with the raw amino-acid sequence, 113 residues long: Large ribosomal subunit protein uL22 (113 aa).

Belongs to the universal ribosomal protein uL22 family. Part of the 50S ribosomal subunit.

In terms of biological role, this protein binds specifically to 23S rRNA; its binding is stimulated by other ribosomal proteins, e.g. L4, L17, and L20. It is important during the early stages of 50S assembly. It makes multiple contacts with different domains of the 23S rRNA in the assembled 50S subunit and ribosome. Functionally, the globular domain of the protein is located near the polypeptide exit tunnel on the outside of the subunit, while an extended beta-hairpin is found that lines the wall of the exit tunnel in the center of the 70S ribosome. In Thermus thermophilus (strain ATCC BAA-163 / DSM 7039 / HB27), this protein is Large ribosomal subunit protein uL22.